We begin with the raw amino-acid sequence, 766 residues long: Darlin (766 aa).

ARM repeat units follow at residues 82 to 119 (QLFEFLLPNGVETLNTDTTVEQSELFSMVCRLLGNLTY), 167 to 208 (DFIQ…NLVD), 423 to 464 (EPNC…NLTL), and 465 to 537 (PTIN…ASMD). Residues 561–585 (EEKEKTIEKTDEKTDEKTNEKKQSK) are disordered. One copy of the ARM 5 repeat lies at 610–649 (HQEKMKQLIEESVEPFFSLLQSPFPILQVEGAKGLVLLIK).

This sequence belongs to the RAP1GDS1 family. Binds to small GTPases racE, racC but not rab21. Binds preferentially to GDP-bound racE.

Functionally, part of a signaling pathway that initiates the aggregation and leads to the formation of aggregation centers or streams. Not essential for cytokinesis, pinocytosis or phagocytosis. Not essential for development, except in starvation-induced aggregation. The sequence is that of Darlin (darA) from Dictyostelium discoideum (Social amoeba).